The sequence spans 377 residues: Odorant receptor 30a (377 aa).

The Cytoplasmic portion of the chain corresponds to 1–34; it reads MELKSMDPVEMPIFGSTLKLMKFWSYLFVHNWRR. Residues 35–55 form a helical membrane-spanning segment; it reads YVAMTPYIIINCTQYVDIYLS. The Extracellular portion of the chain corresponds to 56–65; sequence TESLDFIIRN. The helical transmembrane segment at 66–86 threads the bilayer; it reads VYLAVLFTNTVVRGVLLCVQR. The Cytoplasmic segment spans residues 87 to 127; it reads FSYERFINILKSFYIELLQSDDPIINILVKETTRLSVLISR. A helical membrane pass occupies residues 128 to 148; it reads INLLMGCCTCIGFVTYPIFGS. Over 149-172 the chain is Extracellular; that stretch reads ERVLPYGMYLPTIDEYKYASPYYE. Residues 173-193 traverse the membrane as a helical segment; it reads IFFVIQAIMAPMGCCMYIPYT. The Cytoplasmic portion of the chain corresponds to 194-254; that stretch reads NMVVTFTLFA…SMNALNTHLH (61 aa). A helical membrane pass occupies residues 255-275; that stretch reads LVEFLCFGAMLCVLLFSLIIA. Over 276–280 the chain is Extracellular; the sequence is QTIAQ. Residues 281–301 form a helical membrane-spanning segment; sequence TVIVIAYMVMIFANSVVLYYV. The Cytoplasmic portion of the chain corresponds to 302-344; it reads ANELYFQSFDIAIAAYESNWMDFDVDTQKTLKFLIMRSQKPLA. The helical transmembrane segment at 345-365 threads the bilayer; sequence ILVGGTYPMNLKMLQSLLNAI. Topologically, residues 366-377 are extracellular; that stretch reads YSFFTLLRRVYG.

The protein belongs to the insect chemoreceptor superfamily. Heteromeric odorant receptor channel (TC 1.A.69) family. Or30a subfamily. In terms of assembly, interacts with Orco. Complexes exist early in the endomembrane system in olfactory sensory neurons (OSNs), coupling these complexes to the conserved ciliary trafficking pathway.

The protein resides in the cell membrane. In terms of biological role, odorant receptor which mediates acceptance or avoidance behavior, depending on its substrates. The odorant receptor repertoire encodes a large collection of odor stimuli that vary widely in identity, intensity, and duration. May form a complex with Orco to form odorant-sensing units, providing sensitive and prolonged odorant signaling and calcium permeability. Involved in the behavioral responses to propyl acetate and anisole. This is Odorant receptor 30a (Or30a) from Drosophila melanogaster (Fruit fly).